Consider the following 432-residue polypeptide: MKLVLIDGEHYPDVISWAIKKLGDVCCAVFLGGSEKIGSIGEVERKIGVKVYHSPNYLDALRRALEENKVDEVVDLSDEPVLNYEDRFRIASLCMLYGVSYRGADFHFKPKPLKKTKKPSLAVIGTGKRVGKTAVSGFIARTLKEIAKPVIVTMGRGGPEEPELIEGDKFEITPEFLLKFAESGKHAASDHFEDALTSRVTTIGCRRCGGGMAGFPFFDVVDEGVKLAENLPNDLIILEGSGATFPPYRADRYVVVVGAKQKLDFVRGYFGTFRVSLADIVVVTMADSVGEERWKALRDAILEINPDVDLHFIAFRPRPLGNVSDKRLGLVMTSSEALPKAKKHLEGLGAEVPYTSDNLSKRPLLWRDLEGFRGIDAVAVELKAAAVDVVTRWALEQGIEVIYLDNEPVNIDGKDLRKAVLELGRALLGGRA.

Belongs to the cyclic 2,3-diphosphoglycerate synthetase family.

Its subcellular location is the cytoplasm. The catalysed reaction is (2R)-2,3-bisphosphoglycerate + ATP + H(+) = cyclic (2R)-2,3-bisphosphoglycerate + ADP + phosphate. Its function is as follows. Catalyzes the formation of cyclic 2,3-diphosphoglycerate (cDPG) by formation of an intramolecular phosphoanhydride bond at the expense of ATP. In Thermococcus onnurineus (strain NA1), this protein is Cyclic 2,3-diphosphoglycerate synthetase.